The following is a 451-amino-acid chain: Tubulin alpha-1 chain (451 aa).

Gln-11 lines the GTP pocket. Residue Lys-40 is modified to N6-acetyllysine. GTP contacts are provided by Glu-71, Gly-144, Thr-145, Thr-179, Asn-206, and Asn-228. Glu-71 lines the Mg(2+) pocket. Glu-254 is a catalytic residue.

Belongs to the tubulin family. Dimer of alpha and beta chains. A typical microtubule is a hollow water-filled tube with an outer diameter of 25 nm and an inner diameter of 15 nM. Alpha-beta heterodimers associate head-to-tail to form protofilaments running lengthwise along the microtubule wall with the beta-tubulin subunit facing the microtubule plus end conferring a structural polarity. Microtubules usually have 13 protofilaments but different protofilament numbers can be found in some organisms and specialized cells. Mg(2+) serves as cofactor. In terms of processing, undergoes a tyrosination/detyrosination cycle, the cyclic removal and re-addition of a C-terminal tyrosine residue by the enzymes tubulin tyrosine carboxypeptidase (TTCP) and tubulin tyrosine ligase (TTL), respectively. Post-translationally, acetylation of alpha chains at Lys-40 stabilizes microtubules and affects affinity and processivity of microtubule motors. This modification has a role in multiple cellular functions, ranging from cell motility, cell cycle progression or cell differentiation to intracellular trafficking and signaling.

Its subcellular location is the cytoplasm. It localises to the cytoskeleton. The catalysed reaction is GTP + H2O = GDP + phosphate + H(+). Tubulin is the major constituent of microtubules, a cylinder consisting of laterally associated linear protofilaments composed of alpha- and beta-tubulin heterodimers. Microtubules grow by the addition of GTP-tubulin dimers to the microtubule end, where a stabilizing cap forms. Below the cap, tubulin dimers are in GDP-bound state, owing to GTPase activity of alpha-tubulin. This chain is Tubulin alpha-1 chain (TUBA1), found in Chlamydomonas reinhardtii (Chlamydomonas smithii).